The following is a 394-amino-acid chain: Probable purine permease 8 (394 aa).

A run of 10 helical transmembrane segments spans residues 45 to 65, 77 to 97, 113 to 133, 139 to 159, 172 to 192, 208 to 228, 247 to 267, 289 to 309, 315 to 335, and 344 to 364; these read WLRI…STIL, TWMG…FRFF, FSSF…VSAN, VGLL…QLAF, FTPF…LLVV, VIGI…LSLV, LVAY…FASG, TLAS…GLIF, FSNS…VIVF, and IFSI…HYLD. Positions 373 to 394 are disordered; that stretch reads TSPVGDPHLLPAEEGHTNIHSV. Residues 383–394 show a composition bias toward basic and acidic residues; it reads PAEEGHTNIHSV.

This sequence belongs to the purine permeases (TC 2.A.7.14) family.

Its subcellular location is the membrane. In Arabidopsis thaliana (Mouse-ear cress), this protein is Probable purine permease 8 (PUP8).